We begin with the raw amino-acid sequence, 886 residues long: Extended synaptotagmin-3 (886 aa).

The interval 1 to 21 (MRAEEPCAPGAPSALGAQRTP) is disordered. Residues 1–29 (MRAEEPCAPGAPSALGAQRTPGPELRLSS) are Cytoplasmic-facing. 2 helical membrane passes run 30–50 (QLLPELCTFVVRVLFYLGPVY) and 51–71 (LAGYLGLSITWLLLGALLWMW). Residues 72 to 886 (WRRNRRGKLG…ELTPNGQPRS (815 aa)) are Cytoplasmic-facing. Positions 114-291 (DVERVEWANK…LPNRVTVPVK (178 aa)) constitute an SMP-LTD domain. 2 C2 domains span residues 291–408 (KKGL…DEWF) and 426–566 (SLLT…QLDH). Residues Lys321, Asp322, Asp332, Asp379, Glu380, Asp381, Asp383, Asp385, and Asp386 each coordinate Ca(2+). The segment at 613 to 673 (QGPKAQPQEE…PEPKGKDSAK (61 aa)) is disordered. A compositionally biased stretch (low complexity) spans 642-659 (RSTTTTTSATTVATEPTS). The span at 664-673 (PEPKGKDSAK) shows a compositional bias: basic and acidic residues. The C2 3 domain maps to 754–876 (QLGEIQLTVR…DLIKGFSQWY (123 aa)). Residues 801–808 (RKWACRKK) form a required for phosphatidylinositol 4,5-bisphosphate-dependent location at the cell membrane region.

Belongs to the extended synaptotagmin family. As to quaternary structure, interacts with ESYT1 and ESYT2. Widely expressed with high level in cerebellum and skin.

The protein resides in the cell membrane. Its subcellular location is the endoplasmic reticulum membrane. Binds glycerophospholipids in a barrel-like domain and may play a role in cellular lipid transport. Tethers the endoplasmic reticulum to the cell membrane and promotes the formation of appositions between the endoplasmic reticulum and the cell membrane. This chain is Extended synaptotagmin-3, found in Homo sapiens (Human).